A 229-amino-acid polypeptide reads, in one-letter code: MIKAIVTDIEGTTSDIRFVHSVLFPYARERLADTVRQHGSDPEIAQALDALRQELSQPDADSETLIAALNQFMDEDRKSTALKLLQGIIWRAGYRNGDFQGHLYPEVAAQLAAWQQQGLRLYVYSSGSVEAQQLLFGYSNAGDLRPLFSDYFDTRVGAKRETDSYRTIAQAIGLPAEQLLFLSDIRQELDAAQEAGWHTCQLIRDDADSVSRHRQVARFDQIDLPEYAQ.

Belongs to the HAD-like hydrolase superfamily. MasA/MtnC family. As to quaternary structure, monomer. The cofactor is Mg(2+).

The catalysed reaction is 5-methylsulfanyl-2,3-dioxopentyl phosphate + H2O = 1,2-dihydroxy-5-(methylsulfanyl)pent-1-en-3-one + phosphate. The protein operates within amino-acid biosynthesis; L-methionine biosynthesis via salvage pathway; L-methionine from S-methyl-5-thio-alpha-D-ribose 1-phosphate: step 3/6. It participates in amino-acid biosynthesis; L-methionine biosynthesis via salvage pathway; L-methionine from S-methyl-5-thio-alpha-D-ribose 1-phosphate: step 4/6. In terms of biological role, bifunctional enzyme that catalyzes the enolization of 2,3-diketo-5-methylthiopentyl-1-phosphate (DK-MTP-1-P) into the intermediate 2-hydroxy-3-keto-5-methylthiopentenyl-1-phosphate (HK-MTPenyl-1-P), which is then dephosphorylated to form the acireductone 1,2-dihydroxy-3-keto-5-methylthiopentene (DHK-MTPene). This Pectobacterium carotovorum subsp. carotovorum (strain PC1) protein is Enolase-phosphatase E1.